Here is an 82-residue protein sequence, read N- to C-terminus: Putative membrane protein insertion efficiency factor (82 aa).

The protein belongs to the UPF0161 family.

The protein resides in the cell inner membrane. Functionally, could be involved in insertion of integral membrane proteins into the membrane. This chain is Putative membrane protein insertion efficiency factor, found in Rickettsia rickettsii (strain Iowa).